The chain runs to 232 residues: Orotidine 5'-phosphate decarboxylase (232 aa).

Residues Asp13, Lys35, 62-71 (DLKFHDIPNT), Thr121, Arg182, Gln191, Gly211, and Arg212 each bind substrate. The Proton donor role is filled by Lys64.

It belongs to the OMP decarboxylase family. Type 1 subfamily. As to quaternary structure, homodimer.

It carries out the reaction orotidine 5'-phosphate + H(+) = UMP + CO2. It functions in the pathway pyrimidine metabolism; UMP biosynthesis via de novo pathway; UMP from orotate: step 2/2. Functionally, catalyzes the decarboxylation of orotidine 5'-monophosphate (OMP) to uridine 5'-monophosphate (UMP). This is Orotidine 5'-phosphate decarboxylase from Acinetobacter baumannii (strain AB0057).